The primary structure comprises 642 residues: MFNKNNNNNKIIIILKLFLIILIVNNNNNIKTFGLNLPDGYGAGLVDPTATCSNYIGDSIDQPLCNEKLPNYKNIYTSKNITIQYINQKIVEKTFISLTFLQSKCFDLNFAEFGICDIYFPPCFQTPTTITPIKSVSLPQRLCKSACERMVSNCSSLGASLNCSDPLKFPRIATLYNLTDYGFTANGGFFPVPCSDPLATFENKSTTSELIEICPSPLLLFNSSDPKYSADRGYTYLTPTNCVLPCVAPIYTEKKWHQMYNMSKILSTISFVCSIYNVLTFGILNHRRSKYNYCITFFSASVIIITMMDIVTYGIGYEKLLCPEPGRFAVQSDVSCGATGALFHIGITNGVFWWTTMSICLFAVVKRIKLFDFRYFIIFNTTASLISVIIPLAGNAFMAGTGSLACWIRKTWYVNSVFWIPCGIALTIGSVCIILVIYEIYKITKNVSTKDNRMILLQIKPFLCVTLVGGSFYYLFIFNFDNESHSKEYKEKVVDYVMCLLSDTGKECLMAGPNYVAYFVFYFFIRLFGITFFCIYGTSQNARDIWIHSKILNHPNIKPFLLKYNIINFNSMTHYGSGTNPTSNSKNSKNNQNNQNNNSRKEFESKNIELEVNESISKGQTTRGADDEEESNINSASNTSSD.

An N-terminal signal peptide occupies residues 1–26 (MFNKNNNNNKIIIILKLFLIILIVNN). At 27–264 (NNNIKTFGLN…KWHQMYNMSK (238 aa)) the chain is on the extracellular side. Residues 47-197 (DPTATCSNYI…GFFPVPCSDP (151 aa)) enclose the FZ domain. 3 disulfides stabilise this stretch: Cys52–Cys123, Cys65–Cys116, and Cys143–Cys194. Residues Asn80, Asn153, Asn162, Asn177, Asn203, Asn222, and Asn261 are each glycosylated (N-linked (GlcNAc...) asparagine). Residues 265–285 (ILSTISFVCSIYNVLTFGILN) form a helical membrane-spanning segment. At 286 to 294 (HRRSKYNYC) the chain is on the cytoplasmic side. Residues 295–315 (ITFFSASVIIITMMDIVTYGI) form a helical membrane-spanning segment. Over 316 to 344 (GYEKLLCPEPGRFAVQSDVSCGATGALFH) the chain is Extracellular. A helical membrane pass occupies residues 345–365 (IGITNGVFWWTTMSICLFAVV). Topologically, residues 366–375 (KRIKLFDFRY) are cytoplasmic. Residues 376–398 (FIIFNTTASLISVIIPLAGNAFM) traverse the membrane as a helical segment. Residues 399 to 416 (AGTGSLACWIRKTWYVNS) lie on the Extracellular side of the membrane. Residues 417 to 437 (VFWIPCGIALTIGSVCIILVI) form a helical membrane-spanning segment. Residues 438-460 (YEIYKITKNVSTKDNRMILLQIK) are Cytoplasmic-facing. A helical transmembrane segment spans residues 461–481 (PFLCVTLVGGSFYYLFIFNFD). N-linked (GlcNAc...) asparagine glycosylation occurs at Asn482. Over 482-514 (NESHSKEYKEKVVDYVMCLLSDTGKECLMAGPN) the chain is Extracellular. A helical transmembrane segment spans residues 515-535 (YVAYFVFYFFIRLFGITFFCI). Topologically, residues 536 to 642 (YGTSQNARDI…INSASNTSSD (107 aa)) are cytoplasmic. The disordered stretch occupies residues 578–642 (GTNPTSNSKN…INSASNTSSD (65 aa)). The segment covering 583–598 (SNSKNSKNNQNNQNNN) has biased composition (low complexity). A coiled-coil region spans residues 584–611 (NSKNSKNNQNNQNNNSRKEFESKNIELE). The span at 599–609 (SRKEFESKNIE) shows a compositional bias: basic and acidic residues. Polar residues-rich tracts occupy residues 614-623 (ESISKGQTTR) and 632-642 (NINSASNTSSD).

The protein belongs to the G-protein coupled receptor Fz/Smo family.

It is found in the membrane. The polypeptide is Frizzled and smoothened-like protein B (fslB) (Dictyostelium discoideum (Social amoeba)).